Here is a 180-residue protein sequence, read N- to C-terminus: MSSRLEKFYKDEVVPALMKQFGYTNPMEVPKLVKVTLNMGVGEAATNKKILENAVGDMTKISGQKPVVTKSRVSVASFKIRDGWPIGCKTTLRRHKMYEFLDRLINISLPRVRDFRGVSGRSFDGRGNFNMGVKEQIIFPEIDFDAVDAIRGMDIAITTTAKTDAEAKALLAAFKFPFRN.

Belongs to the universal ribosomal protein uL5 family. As to quaternary structure, part of the 50S ribosomal subunit; part of the 5S rRNA/L5/L18/L25 subcomplex. Contacts the 5S rRNA and the P site tRNA. Forms a bridge to the 30S subunit in the 70S ribosome.

This is one of the proteins that bind and probably mediate the attachment of the 5S RNA into the large ribosomal subunit, where it forms part of the central protuberance. In the 70S ribosome it contacts protein S13 of the 30S subunit (bridge B1b), connecting the 2 subunits; this bridge is implicated in subunit movement. Contacts the P site tRNA; the 5S rRNA and some of its associated proteins might help stabilize positioning of ribosome-bound tRNAs. This Stenotrophomonas maltophilia (strain K279a) protein is Large ribosomal subunit protein uL5.